The following is a 99-amino-acid chain: NADH dehydrogenase [ubiquinone] 1 alpha subcomplex subunit 2 (99 aa).

Ala2 bears the N-acetylalanine mark. A disulfide bond links Cys24 and Cys58. Lys64 carries the post-translational modification N6-acetyllysine; alternate. Lys64 is modified (N6-succinyllysine; alternate). Residue Lys75 is modified to N6-acetyllysine.

Belongs to the complex I NDUFA2 subunit family. In terms of assembly, complex I is composed of 45 different subunits.

Its subcellular location is the mitochondrion inner membrane. Accessory subunit of the mitochondrial membrane respiratory chain NADH dehydrogenase (Complex I), that is believed not to be involved in catalysis. Complex I functions in the transfer of electrons from NADH to the respiratory chain. The immediate electron acceptor for the enzyme is believed to be ubiquinone. The chain is NADH dehydrogenase [ubiquinone] 1 alpha subcomplex subunit 2 (NDUFA2) from Macaca fascicularis (Crab-eating macaque).